The following is a 498-amino-acid chain: Acetyl-coenzyme A carboxylase carboxyl transferase subunit beta, chloroplastic (498 aa).

A disordered region spans residues 36-59 (SVNEDPIINDMDKDIPSGSDSDNS). Residues 231–498 (LWVQCENCYG…FFPLNQNSIK (268 aa)) form the CoA carboxyltransferase N-terminal domain. Residues cysteine 235, cysteine 238, cysteine 254, and cysteine 257 each coordinate Zn(2+). The segment at 235 to 257 (CENCYGLNYKRFLKSKMNICEHC) adopts a C4-type zinc-finger fold.

Belongs to the AccD/PCCB family. Acetyl-CoA carboxylase is a heterohexamer composed of biotin carboxyl carrier protein, biotin carboxylase and 2 subunits each of ACCase subunit alpha and ACCase plastid-coded subunit beta (accD). It depends on Zn(2+) as a cofactor.

The protein resides in the plastid. It is found in the chloroplast stroma. It carries out the reaction N(6)-carboxybiotinyl-L-lysyl-[protein] + acetyl-CoA = N(6)-biotinyl-L-lysyl-[protein] + malonyl-CoA. It functions in the pathway lipid metabolism; malonyl-CoA biosynthesis; malonyl-CoA from acetyl-CoA: step 1/1. Its function is as follows. Component of the acetyl coenzyme A carboxylase (ACC) complex. Biotin carboxylase (BC) catalyzes the carboxylation of biotin on its carrier protein (BCCP) and then the CO(2) group is transferred by the transcarboxylase to acetyl-CoA to form malonyl-CoA. The polypeptide is Acetyl-coenzyme A carboxylase carboxyl transferase subunit beta, chloroplastic (Morus indica (Mulberry)).